The following is a 308-amino-acid chain: 1D-myo-inositol 2-acetamido-2-deoxy-alpha-D-glucopyranoside deacetylase (308 aa).

Residues His13, Asp16, and His147 each coordinate Zn(2+).

It belongs to the MshB deacetylase family. The cofactor is Zn(2+).

The enzyme catalyses 1D-myo-inositol 2-acetamido-2-deoxy-alpha-D-glucopyranoside + H2O = 1D-myo-inositol 2-amino-2-deoxy-alpha-D-glucopyranoside + acetate. Its function is as follows. Catalyzes the deacetylation of 1D-myo-inositol 2-acetamido-2-deoxy-alpha-D-glucopyranoside (GlcNAc-Ins) in the mycothiol biosynthesis pathway. This Mycobacterium leprae (strain Br4923) protein is 1D-myo-inositol 2-acetamido-2-deoxy-alpha-D-glucopyranoside deacetylase.